The chain runs to 155 residues: Myelin basic protein (155 aa).

Residues 1–72 (MASATTSDHA…HQGARRQTDD (72 aa)) form a disordered region. The residue at position 2 (alanine 2) is an N-acetylalanine; in forms C1, C2, C3 and C8. Glutamine 12 is modified (deamidated glutamine; in forms C1, C2 and C3). Over residues 37–49 (GSRKVPEKGKEPA) the composition is skewed to basic and acidic residues. A phosphoserine; in forms C1, C2 and C3 mark is found at serine 73 and serine 84. Residues 113-155 (RAHYGAAGSSKSKDGFRGRRDGSGTLSSFFKMGKKGEGSPARR) form a disordered region. Phosphoserine; in forms C1 and C3 is present on residues serine 121 and serine 122. The segment covering 123–134 (KSKDGFRGRRDG) has biased composition (basic and acidic residues). Serine 135, serine 139, and serine 140 each carry phosphoserine; in forms C1, C2 and C3.

This sequence belongs to the myelin basic protein family. Several charge isomers are produced as a result of optional post-translational modifications, such as phosphorylation, deamidation and citrullination. Dogfish MBP contains four major components designated as C1, C2, C3 and C8. C1 and C3, but not C2 are phosphorylated at either Ser-121 or Ser-122; C2 is phosphorylated at 2 or 3 sites among Ser-135, Ser-139 and Ser-140. Hydroxyproline and citrulline are present but were not identified in either C1, C2 or C3, which suggests their presence in C8.

The protein resides in the myelin membrane. In terms of biological role, this protein may function to maintain proper structure of myelin. This Squalus acanthias (Spiny dogfish) protein is Myelin basic protein (MBP).